The primary structure comprises 99 residues: NADH-quinone oxidoreductase subunit K (99 aa).

A run of 3 helical transmembrane segments spans residues 2–22 (PVEY…LGVL), 28–48 (LILM…FLAF), and 60–80 (IAFF…AVVI).

The protein belongs to the complex I subunit 4L family. As to quaternary structure, NDH-1 is composed of 14 different subunits. Subunits NuoA, H, J, K, L, M, N constitute the membrane sector of the complex.

The protein localises to the cell inner membrane. It carries out the reaction a quinone + NADH + 5 H(+)(in) = a quinol + NAD(+) + 4 H(+)(out). Functionally, NDH-1 shuttles electrons from NADH, via FMN and iron-sulfur (Fe-S) centers, to quinones in the respiratory chain. The immediate electron acceptor for the enzyme in this species is believed to be ubiquinone. Couples the redox reaction to proton translocation (for every two electrons transferred, four hydrogen ions are translocated across the cytoplasmic membrane), and thus conserves the redox energy in a proton gradient. The polypeptide is NADH-quinone oxidoreductase subunit K (Anaeromyxobacter dehalogenans (strain 2CP-1 / ATCC BAA-258)).